Here is a 224-residue protein sequence, read N- to C-terminus: LexA repressor (224 aa).

Positions 29–49 form a DNA-binding region, H-T-H motif; that stretch reads RAEIARALGFRSPNAAEDHLK. Active-site for autocatalytic cleavage activity residues include Ser-142 and Lys-179.

Belongs to the peptidase S24 family. Homodimer.

The catalysed reaction is Hydrolysis of Ala-|-Gly bond in repressor LexA.. In terms of biological role, represses a number of genes involved in the response to DNA damage (SOS response), including recA and lexA. In the presence of single-stranded DNA, RecA interacts with LexA causing an autocatalytic cleavage which disrupts the DNA-binding part of LexA, leading to derepression of the SOS regulon and eventually DNA repair. The polypeptide is LexA repressor (Bordetella petrii (strain ATCC BAA-461 / DSM 12804 / CCUG 43448)).